The chain runs to 461 residues: UDP-glucosyltransferase 1 (461 aa).

It belongs to the UDP-glycosyltransferase family.

It participates in secondary metabolite biosynthesis. Functionally, UDP-glucosyltransferase; part of the pathway that mediates the biosynthesis of tenellin-type 2-pyridones, iron-chelating compounds involved in iron stress tolerance, competition with the natural competitor fungus Metarhizium robertsii and insect hosts infection. Targets the N-OH hydroxyl residue of 15-hydroxytellenin (15-HT) to produce pyridovericin-N-O-(beta-D-glucopyranoside) which is further methylated by the methyltransferase MT1 to yield pyridovericin-N-O-(4-O-methyl-beta-D-glucopyranoside) (PMGP). The pathway begins with the assembly of the polyketide-amino acid backbone by the hybrid PKS-NRPS tenS with the help of the enoyl reductase tenC. These enzymes catalyze the synthesis of the pyrrolidine-2-dione intermediates pretellinin A, 11-hydropretellenin A, 12-hydropretellenin A, 13-hydropretellenin A, 14-hydropretellenin A, 12-oxopretellenin A and prototellinin D. The cytochrome P450 monooxygenase tenA then catalyzes an oxidative ring expansion of pretenellin A and 14-hydropretellenin A to form the 2-pyridone core, leading to pretenellin B and pyridovericin, respectively. The cytochrome P450 monooxygenase tenB is then required for the selective N-hydroxylation of the 2-pyridone nitrogen of yield tellinin and 15-hydroxytellenin (15-HT), respectively. The UDP-glucosyltransferase GT1 and the methyltransferase MT1, located outside the tenS gene cluster, contribute to the stepwise glycosylation and methylation of 15-HT to obtain the glycoside pyridovericin-N-O-(4-O-methyl-beta-D-glucopyranoside) (PMGP). Additional related compounds such as 1-O-methyl-15-HT, (8Z)-1-O-methyl-15-HT, and O-methyltenellin A are also produced but the enzymes involved in their biosynthesis have still to be determined. The sequence is that of UDP-glucosyltransferase 1 from Beauveria bassiana (strain ARSEF 2860) (White muscardine disease fungus).